We begin with the raw amino-acid sequence, 981 residues long: MVHHSGSIQSFKQQKGMNISKSEITTEASLKPSRRSLPCLAQSYAHSKSLSQSASLFQSTESESQAPTSVTFLSADKPEHVTSEESRKDSTLKCSFADLSDFCLALGKDKDYLDESEHANYDRSRLLNDFVTKDKPASKTKLSKNDMSYIASSGLLFKDGKKRIDYILVYRKTNIQYDKRNTFEKNLRAEGLMLEKEPAIANPDIMFIKIHIPWDTLCKYAERLNIRVPFRKKCYYTDQKNKSKSRVQNYFKRIKKWMSQNPMVLDKSAFPELEESDCYTGPFSRARIHHFIINNKDTFFSNATRSRIVYHMLERTKYENGISKVGIRKLITNGSYIAAFPPHEGAYKSSLPIKTHGPQNNRHLLYERWARWGMWYKHQPLDLIRMYFGEKIGLYFAWLGWYTGMLIPAAVVGLCVFFYGLVTMNESQVSQEICKATEVFMCPLCDKNCSLQRLNDSCIYAKVTYLFDNGGTVFFAIFMAIWATVFLEFWKRRRSILTYTWDLIEWEEEEETLRPQFEAKYYRMEVINPITGKPEPHQPSSDKVTRLLVSVSGIFFMISLVITAVFAVVVYRLVVMEQFASFKWNFVKQHWQFATSGAAVCINFIIIMLLNLAYEKIAYLLTNLEYPRTESEWENSFALKMFLFQFVNLNSSIFYIAFFLGRFVGHPGKYNKLFERWRLEECHPSGCLIDLCLQMGVIMFLKQIWNNFMELGYPLIQNWWSRHKIKRGIQDASIPQWENDWNLQPMNIHGLMDEYLEMVLQFGFTTIFVAAFPLAPLLALLNNIIEIRLDAYKFVTQWRRPLPARATDIGIWLGILEGIGILAVITNAFVIAITSDYIPRFVYEYKYGPCANHVKQNENCLKGYVNNSLSFFDLSELGMGKSGYCRYRDYRGPPWSSKPYEFTLQYWHILAARLAFIIVFEHLVFGIKSFIAYLIPDIPKGLRERIRREKYLVQEMMYEAELEHLQQQRRKSGQPIHHEWP.

The span at 1–28 (MVHHSGSIQSFKQQKGMNISKSEITTEA) shows a compositional bias: polar residues. 2 disordered regions span residues 1–32 (MVHH…SLKP) and 67–87 (PTSV…EESR). Residues 1-403 (MVHHSGSIQS…LYFAWLGWYT (403 aa)) lie on the Cytoplasmic side of the membrane. Residues 76-87 (DKPEHVTSEESR) show a composition bias toward basic and acidic residues. A helical transmembrane segment spans residues 404 to 424 (GMLIPAAVVGLCVFFYGLVTM). N-linked (GlcNAc...) asparagine glycosylation is found at N425, N448, and N455. Over 425 to 469 (NESQVSQEICKATEVFMCPLCDKNCSLQRLNDSCIYAKVTYLFDN) the chain is Extracellular. Residues 470–490 (GGTVFFAIFMAIWATVFLEFW) traverse the membrane as a helical segment. Residues 491–550 (KRRRSILTYTWDLIEWEEEEETLRPQFEAKYYRMEVINPITGKPEPHQPSSDKVTRLLVS) are Cytoplasmic-facing. Residues 551–571 (VSGIFFMISLVITAVFAVVVY) form a helical membrane-spanning segment. At 572–592 (RLVVMEQFASFKWNFVKQHWQ) the chain is on the extracellular side. A helical membrane pass occupies residues 593–613 (FATSGAAVCINFIIIMLLNLA). Over 614-640 (YEKIAYLLTNLEYPRTESEWENSFALK) the chain is Cytoplasmic. The helical transmembrane segment at 641–661 (MFLFQFVNLNSSIFYIAFFLG) threads the bilayer. At 662–761 (RFVGHPGKYN…MDEYLEMVLQ (100 aa)) the chain is on the extracellular side. Residues 762-782 (FGFTTIFVAAFPLAPLLALLN) form a helical membrane-spanning segment. Residues 783–810 (NIIEIRLDAYKFVTQWRRPLPARATDIG) lie on the Cytoplasmic side of the membrane. A helical transmembrane segment spans residues 811–831 (IWLGILEGIGILAVITNAFVI). Over 832–914 (AITSDYIPRF…QYWHILAARL (83 aa)) the chain is Extracellular. N-linked (GlcNAc...) asparagine glycosylation occurs at N866. The helical transmembrane segment at 915–935 (AFIIVFEHLVFGIKSFIAYLI) threads the bilayer. Topologically, residues 936–981 (PDIPKGLRERIRREKYLVQEMMYEAELEHLQQQRRKSGQPIHHEWP) are cytoplasmic.

It belongs to the anoctamin family. As to quaternary structure, interacts with KCNT1/Slack. As to expression, predominantly expressed in neuronal tissues. Expressed in brain.

The protein resides in the cell membrane. It catalyses the reaction a 1,2-diacyl-sn-glycero-3-phosphocholine(in) = a 1,2-diacyl-sn-glycero-3-phosphocholine(out). It carries out the reaction a beta-D-galactosyl-(1&lt;-&gt;1')-N-acylsphing-4-enine(out) = a beta-D-galactosyl-(1&lt;-&gt;1')-N-acylsphing-4-enine(in). Functionally, has calcium-dependent phospholipid scramblase activity; scrambles phosphatidylcholine and galactosylceramide. Does not exhibit calcium-activated chloride channel (CaCC) activity. Seems to act as potassium channel regulator and may inhibit pain signaling; can facilitate KCNT1/Slack channel activity by promoting its full single-channel conductance at very low sodium concentrations and by increasing its sodium sensitivity. In Mus musculus (Mouse), this protein is Anoctamin-3.